The primary structure comprises 100 residues: Large ribosomal subunit protein bL27 (100 aa).

The propeptide occupies Met-1–Phe-9. A disordered region spans residues Lys-13 to Lys-32.

Belongs to the bacterial ribosomal protein bL27 family. In terms of processing, the N-terminus is cleaved by ribosomal processing cysteine protease Prp.

The protein is Large ribosomal subunit protein bL27 of Clostridium kluyveri (strain ATCC 8527 / DSM 555 / NBRC 12016 / NCIMB 10680 / K1).